We begin with the raw amino-acid sequence, 312 residues long: Malate dehydrogenase (312 aa).

Residues 7-13 (GAAGGIG) and D34 each bind NAD(+). Substrate is bound by residues R81 and R87. Residues N94 and 117–119 (ITN) contribute to the NAD(+) site. Substrate is bound by residues N119 and R153. The active-site Proton acceptor is H177. M228 is an NAD(+) binding site.

Belongs to the LDH/MDH superfamily. MDH type 1 family. As to quaternary structure, homodimer.

The catalysed reaction is (S)-malate + NAD(+) = oxaloacetate + NADH + H(+). Functionally, catalyzes the reversible oxidation of malate to oxaloacetate. This Mannheimia succiniciproducens (strain KCTC 0769BP / MBEL55E) protein is Malate dehydrogenase.